An 876-amino-acid chain; its full sequence is DDB1- and CUL4-associated factor 6 (876 aa).

5 WD repeats span residues 49-88, 92-133, 139-179, 189-229, and 251-290; these read VHDG…VLTT, GHRA…ETNR, CHYG…SCTK, NCRR…TRAT, and NKSC…AREL. Composition is skewed to basic and acidic residues over residues 288-303 and 312-334; these read RELK…EELR and LRGD…RDGE. 5 disordered regions span residues 288–340, 355–391, 408–485, 498–645, and 658–691; these read RELK…PNVS, EASE…SSPN, LQPS…TEGT, WSST…NPEL, and EDPS…GPGD. The residue at position 336 (S336) is a Phosphoserine. Polar residues-rich tracts occupy residues 375-391 and 409-422; these read TNQP…SSPN and QPST…QAQA. Residues 456–466 are compositionally biased toward basic and acidic residues; sequence HQSDNSNERLS. The span at 499 to 510 shows a compositional bias: low complexity; sequence SSTASSSRGNGS. Basic and acidic residues predominate over residues 534-544; that stretch reads SETRAPEELSE. Composition is skewed to polar residues over residues 550 to 562, 571 to 584, 603 to 613, and 621 to 645; these read ENLT…TAQL, DSNS…SQDS, EQASTESATRH, and PSQT…NPEL. S665 carries the phosphoserine modification. Position 670 is a phosphothreonine (T670). S673 is subject to Phosphoserine. Residues 692–721 form the IQ domain; the sequence is RRSAVARIQEFFRRRKERKEMEELDTLNIR. WD repeat units follow at residues 734 to 772 and 775 to 814; these read NSRT…HLML and ADNH…RIFN. Residues S863 and S866 each carry the phosphoserine modification.

In terms of assembly, interacts with the nuclear receptors NR3C1 and AR in the presence of ligand. Interacts with DDB1, CUL4A and CUL4B.

The protein localises to the nucleus. The protein operates within protein modification; protein ubiquitination. In terms of biological role, ligand-dependent coactivator of nuclear receptors. Enhance transcriptional activity of the nuclear receptors NR3C1 and AR. May function as a substrate receptor for CUL4-DDB1 E3 ubiquitin-protein ligase complex. This Mus musculus (Mouse) protein is DDB1- and CUL4-associated factor 6 (Dcaf6).